We begin with the raw amino-acid sequence, 739 residues long: Phosphoribosylformylglycinamidine synthase subunit PurL (739 aa).

His-53 is an active-site residue. ATP is bound by residues Tyr-56 and Lys-95. Position 97 (Glu-97) interacts with Mg(2+). Residues 98 to 101 and Arg-120 each bind substrate; that span reads SHNH. The Proton acceptor role is filled by His-99. Residue Asp-121 participates in Mg(2+) binding. Gln-244 serves as a coordination point for substrate. Mg(2+) is bound at residue Asp-274. 318-320 is a binding site for substrate; it reads ESQ. ATP contacts are provided by Asp-501 and Gly-538. Residue Asn-539 participates in Mg(2+) binding. Ser-541 lines the substrate pocket.

Belongs to the FGAMS family. Monomer. Part of the FGAM synthase complex composed of 1 PurL, 1 PurQ and 2 PurS subunits.

Its subcellular location is the cytoplasm. The enzyme catalyses N(2)-formyl-N(1)-(5-phospho-beta-D-ribosyl)glycinamide + L-glutamine + ATP + H2O = 2-formamido-N(1)-(5-O-phospho-beta-D-ribosyl)acetamidine + L-glutamate + ADP + phosphate + H(+). The protein operates within purine metabolism; IMP biosynthesis via de novo pathway; 5-amino-1-(5-phospho-D-ribosyl)imidazole from N(2)-formyl-N(1)-(5-phospho-D-ribosyl)glycinamide: step 1/2. Part of the phosphoribosylformylglycinamidine synthase complex involved in the purines biosynthetic pathway. Catalyzes the ATP-dependent conversion of formylglycinamide ribonucleotide (FGAR) and glutamine to yield formylglycinamidine ribonucleotide (FGAM) and glutamate. The FGAM synthase complex is composed of three subunits. PurQ produces an ammonia molecule by converting glutamine to glutamate. PurL transfers the ammonia molecule to FGAR to form FGAM in an ATP-dependent manner. PurS interacts with PurQ and PurL and is thought to assist in the transfer of the ammonia molecule from PurQ to PurL. The polypeptide is Phosphoribosylformylglycinamidine synthase subunit PurL (Listeria innocua serovar 6a (strain ATCC BAA-680 / CLIP 11262)).